The sequence spans 238 residues: DNA repair protein RecO (238 aa).

The protein belongs to the RecO family.

Involved in DNA repair and RecF pathway recombination. The chain is DNA repair protein RecO from Aliivibrio salmonicida (strain LFI1238) (Vibrio salmonicida (strain LFI1238)).